We begin with the raw amino-acid sequence, 633 residues long: GTPase-GDP dissociation stimulator BEM4 (633 aa).

As to quaternary structure, interacts with CDC42; the interaction is direct. Interacts with RHO1; the interaction is direct. Interacts with RHO2. Interacts with RHO4. Interacts with CDC11.

It localises to the nucleus. The protein resides in the cytoplasm. Functionally, probably acts as a GEF (guanine nucleotide exchange factor) for the Rho family of small GTP-binding proteins (G proteins) that stimulates the dissociation of GDP to enable subsequent binding of GTP. May also chaperone the processing and/or trafficking of small GTPases independently of GEF activity. Involved in the control of polarized cell growth via CDC42-mediated signaling. Involved in the control of cell-wall organization via RHO1-mediated signaling. May also function via RHO2 and RHO4. The polypeptide is GTPase-GDP dissociation stimulator BEM4 (Saccharomyces cerevisiae (strain ATCC 204508 / S288c) (Baker's yeast)).